The chain runs to 165 residues: Phosphopantetheine adenylyltransferase (165 aa).

Ser-9 is a substrate binding site. ATP contacts are provided by residues 9–10 and His-17; that span reads SF. The substrate site is built by Lys-41, Leu-73, and Lys-87. ATP-binding positions include 88 to 90, Glu-98, and 122 to 128; these read GLR and YSFLSSS.

It belongs to the bacterial CoaD family. In terms of assembly, homohexamer. Mg(2+) is required as a cofactor.

The protein resides in the cytoplasm. It carries out the reaction (R)-4'-phosphopantetheine + ATP + H(+) = 3'-dephospho-CoA + diphosphate. It participates in cofactor biosynthesis; coenzyme A biosynthesis; CoA from (R)-pantothenate: step 4/5. Functionally, reversibly transfers an adenylyl group from ATP to 4'-phosphopantetheine, yielding dephospho-CoA (dPCoA) and pyrophosphate. The polypeptide is Phosphopantetheine adenylyltransferase (Acidothermus cellulolyticus (strain ATCC 43068 / DSM 8971 / 11B)).